The sequence spans 289 residues: Purine nucleoside phosphorylase (289 aa).

N-acetylmethionine is present on M1. Residues S33, H64, and 84–86 (RFH) contribute to the phosphate site. Y88 is a binding site for a purine D-ribonucleoside. Phosphate is bound at residue A116. Residues E201 and M219 each contribute to the a purine D-ribonucleoside site. S220 serves as a coordination point for phosphate. Residue N243 participates in a purine D-ribonucleoside binding. S251 carries the post-translational modification Phosphoserine. H257 is a binding site for a purine D-ribonucleoside.

This sequence belongs to the PNP/MTAP phosphorylase family. In terms of assembly, homotrimer.

Its subcellular location is the cytoplasm. The catalysed reaction is inosine + phosphate = alpha-D-ribose 1-phosphate + hypoxanthine. It carries out the reaction guanosine + phosphate = alpha-D-ribose 1-phosphate + guanine. It catalyses the reaction 2'-deoxyguanosine + phosphate = 2-deoxy-alpha-D-ribose 1-phosphate + guanine. The enzyme catalyses 2'-deoxyinosine + phosphate = 2-deoxy-alpha-D-ribose 1-phosphate + hypoxanthine. It functions in the pathway purine metabolism; purine nucleoside salvage. Functionally, catalyzes the phosphorolytic breakdown of the N-glycosidic bond in the beta-(deoxy)ribonucleoside molecules, with the formation of the corresponding free purine bases and pentose-1-phosphate. Preferentially acts on 6-oxopurine nucleosides including inosine and guanosine. The chain is Purine nucleoside phosphorylase (PNP) from Bos taurus (Bovine).